The chain runs to 232 residues: Ashwin (232 aa).

Basic and acidic residues-rich tracts occupy residues 64-97 and 116-127; these read DLPK…DGLR and KKTENGDNDRLR. Residues 64–232 form a disordered region; the sequence is DLPKSRWGKM…KRKIQHVTWP (169 aa). Over residues 130–140 the composition is skewed to polar residues; it reads PQASATSNTFR. Ser-143 carries the phosphoserine modification. Residues 144–156 show a composition bias toward low complexity; that stretch reads DSSSSVSPLVLSS. Residues 163–179 show a composition bias toward basic and acidic residues; that stretch reads KMEHGNNDNKQNHDLTH. A phosphoserine mark is found at Ser-182, Ser-189, and Ser-193. Thr-198 carries the phosphothreonine modification.

This sequence belongs to the ashwin family. As to quaternary structure, component of the tRNA-splicing ligase complex.

Its subcellular location is the nucleus. The sequence is that of Ashwin from Bos taurus (Bovine).